A 505-amino-acid polypeptide reads, in one-letter code: Ent-kaurene oxidase 2 (505 aa).

A helical transmembrane segment spans residues 3 to 23; the sequence is AFVPGGAGAAAAAVGGFVAAA. C449 is a binding site for heme.

Belongs to the cytochrome P450 family. It depends on heme as a cofactor. Widely expressed.

The protein localises to the membrane. The catalysed reaction is ent-kaur-16-ene + 3 reduced [NADPH--hemoprotein reductase] + 3 O2 = ent-kaur-16-en-19-oate + 3 oxidized [NADPH--hemoprotein reductase] + 4 H2O + 4 H(+). It functions in the pathway plant hormone biosynthesis; gibberellin biosynthesis. Functionally, catalyzes three successive oxidations of the 4-methyl group of ent-kaurene giving kaurenoic acid, a key step in gibberellins (GAs) biosynthesis. GAs, which are involved many processes, including stem elongation, play a central role in plant development. This Oryza sativa subsp. japonica (Rice) protein is Ent-kaurene oxidase 2.